Reading from the N-terminus, the 203-residue chain is Ribonuclease T (203 aa).

The 175-residue stretch at 11 to 185 (VVVDVETGGF…YDTEKTAELF (175 aa)) folds into the Exonuclease domain. Mg(2+) contacts are provided by Asp-14, Glu-16, His-172, and Asp-177. The active-site Proton donor/acceptor is the His-172.

Belongs to the RNase T family. In terms of assembly, homodimer. Requires Mg(2+) as cofactor.

In terms of biological role, trims short 3' overhangs of a variety of RNA species, leaving a one or two nucleotide 3' overhang. Responsible for the end-turnover of tRNA: specifically removes the terminal AMP residue from uncharged tRNA (tRNA-C-C-A). Also appears to be involved in tRNA biosynthesis. This is Ribonuclease T from Pseudomonas putida (strain ATCC 47054 / DSM 6125 / CFBP 8728 / NCIMB 11950 / KT2440).